The sequence spans 50 residues: Defensin D1 (50 aa).

Intrachain disulfides connect cysteine 3–cysteine 50, cysteine 14–cysteine 35, cysteine 20–cysteine 44, and cysteine 24–cysteine 46.

In terms of processing, contains 4 disulfide bonds.

The protein resides in the secreted. In terms of biological role, antimicrobial peptide active against fungi, Gram-positive and Gram-negative bacteria. Inhibits growth of hyphae in the fungi A.niger (IC(50)=3.5 ug/ml), B.sorokiniana (IC(50)=3.0 ug/ml), F.oxysporum (IC(50)=9.5 ug/ml), F.graminearum (IC(50)=6.9 ug/ml), F.culmorum (IC(50)=6.9 ug/ml) and B.cinerea (IC(50)=27.4 ug/ml). Has no effect on spore germination. Destroys spores in germinated conidia by disruption of cell walls and membranes in A.niger and B.sorokiniana. Causes vacuolization of germinated macro- and microconidia in F.oxysporum, F.graminearum and F.culmorum. Strongly inhibits growth of P.infestans on potato tubers above concentrations of 13.6 ug/ml. Inhibits growth of Gram-positive bacteria C.michiganensis and B.subtilis and of Gram-negative bacteria P.syringae, E.carotovora and E.coli. The chain is Defensin D1 from Nigella sativa (Black cumin).